The primary structure comprises 192 residues: Adenylate kinase (192 aa).

11–16 contacts ATP; the sequence is GSGKGT. An NMP region spans residues 31-60; it reads STGDIFRANVKGETPLGIEAKKYMDNGDFV. Residues Thr-32, Arg-37, 58 to 60, 86 to 89, and Gln-93 contribute to the AMP site; these read DFV and GYPR. The LID stretch occupies residues 127–137; that stretch reads GRAKETGRSDD. Residue Arg-128 coordinates ATP. Positions 134 and 145 each coordinate AMP. Gly-173 is a binding site for ATP.

Belongs to the adenylate kinase family. Monomer.

The protein resides in the cytoplasm. It catalyses the reaction AMP + ATP = 2 ADP. Its pathway is purine metabolism; AMP biosynthesis via salvage pathway; AMP from ADP: step 1/1. In terms of biological role, catalyzes the reversible transfer of the terminal phosphate group between ATP and AMP. Plays an important role in cellular energy homeostasis and in adenine nucleotide metabolism. The sequence is that of Adenylate kinase from Pseudarthrobacter chlorophenolicus (strain ATCC 700700 / DSM 12829 / CIP 107037 / JCM 12360 / KCTC 9906 / NCIMB 13794 / A6) (Arthrobacter chlorophenolicus).